A 285-amino-acid polypeptide reads, in one-letter code: Proteasome subunit beta (285 aa).

A propeptide spans 1–50 (removed in mature form; by autocatalysis); sequence MTAEHPARLPQAFMTPGSSSFVDFLAAHDPSLLPSSRALPAGSAPPAPHG. Catalysis depends on Thr51, which acts as the Nucleophile. Positions 266 to 285 are disordered; that stretch reads RTRQARSSRSRHGSLGGDLR.

Belongs to the peptidase T1B family. As to quaternary structure, the 20S proteasome core is composed of 14 alpha and 14 beta subunits that assemble into four stacked heptameric rings, resulting in a barrel-shaped structure. The two inner rings, each composed of seven catalytic beta subunits, are sandwiched by two outer rings, each composed of seven alpha subunits. The catalytic chamber with the active sites is on the inside of the barrel. Has a gated structure, the ends of the cylinder being occluded by the N-termini of the alpha-subunits. Is capped by the proteasome-associated ATPase, ARC.

The protein resides in the cytoplasm. It catalyses the reaction Cleavage of peptide bonds with very broad specificity.. It participates in protein degradation; proteasomal Pup-dependent pathway. The formation of the proteasomal ATPase ARC-20S proteasome complex, likely via the docking of the C-termini of ARC into the intersubunit pockets in the alpha-rings, may trigger opening of the gate for substrate entry. Interconversion between the open-gate and close-gate conformations leads to a dynamic regulation of the 20S proteasome proteolysis activity. Its function is as follows. Component of the proteasome core, a large protease complex with broad specificity involved in protein degradation. This is Proteasome subunit beta from Sanguibacter keddieii (strain ATCC 51767 / DSM 10542 / NCFB 3025 / ST-74).